The following is a 5084-amino-acid chain: Apicidin F synthase (5084 aa).

Residues 209-606 (ARILQRQPDK…VGRLDSQVKL (398 aa)) form an adenylation 1 region. One can recognise a Carrier 1 domain in the interval 731–808 (HETDNCQRLL…EAASSMREVV (78 aa)). Ser-768 bears the O-(pantetheine 4'-phosphoryl)serine mark. Condensation stretches follow at residues 822 to 1124 (YPLS…FPIY) and 1309 to 1609 (EIYC…SILV). Residues 1788–2192 (EDPTREAVFS…IGRKDNQIKI (405 aa)) are adenylation 2. The Carrier 2 domain occupies 2341 to 2415 (VVKDDPVSEL…DMAKGMAPLS (75 aa)). Ser-2376 bears the O-(pantetheine 4'-phosphoryl)serine mark. A disordered region spans residues 2415 to 2441 (SLTAPESTSSSSPQSFSTSTSTTIIEN). Low complexity predominate over residues 2421-2437 (STSSSSPQSFSTSTSTT). The interval 2478–2755 (EDIFPCTPMQ…IVTLPRQLNI (278 aa)) is condensation 3. Residues 2935–3328 (RNNPRARAVV…GRRDGQIKLR (394 aa)) form an adenylation 3 region. The Carrier 3 domain maps to 3463-3539 (ETWSSSEAIV…DMASRLSRPE (77 aa)). Position 3500 is an O-(pantetheine 4'-phosphoryl)serine (Ser-3500). Residues 3581–3866 (EDIYPCTPLQ…IATVPSRTTI (286 aa)) form a condensation 4 region. Residues 4029–4426 (RKQVELSPSH…TVSWIGRKDH (398 aa)) are adenylation 4. The Carrier 4 domain occupies 4554–4631 (ALKTPKERLL…DMADLLGPLR (78 aa)). Ser-4592 is subject to O-(pantetheine 4'-phosphoryl)serine. Residues 4669-4948 (EQIYPCTAYQ…ISKLPLRIQL (280 aa)) are condensation 5.

The protein belongs to the NRP synthetase family.

It participates in secondary metabolite biosynthesis. Non-ribosomal peptide synthetase; part of the gene cluster that mediates the biosynthesis of the cyclic tetrapeptide apicidin F (APF). The non-ribosomal peptide synthetase apf1 incorporates four different amino acids to produce apicidin F: L-phenylalanine, D-pipecolic acid (D-pip), N-methoxy-L-tryptophan and L-2-aminooctanedioic acid. L-Phenylalanine is the only proteinogenic amino acid directly used by apf1. The 3 other apf1 substrates are non-proteinogenic and have to be modified by other enzymes of the cluster. Lysine is converted to delta-1-pyrroline-5-carboxylate (P5C) which is reduced to L-pipecolic acid (L-pip) by apf3. L-pip is epimerized to D-pip, probably by apf1 activity, prior to incorporation. L-Tryptophan is N-oxidyzed by one of the cytochrome P450 monooxygenases (apf7 or apf8), and further methylated at the hydroxy group by the O-methyltransferase apf6 to yield N-methoxy-L-tryptophan. The synthesis of the fourth apf1 substrate is more complex. The fatty acid synthase apf5 is involved in the synthesis of the octanoic acid backbone of L-2-aminooctanedioic acid by fixing one acetyl-CoA unit and three malonyl-CoA units. Then one of the cytochrome P450 monooxygenases (apf7 or apf8) may oxidize this backbone to 2-oxooctanoic acid. The aminotransferase apf4 is predicted to catalyze the exchange of the keto group with an amino group. The next step would be the oxidation of 2-aminooctanoic acid by one of the cytochrome P450 monooxygenases (apf7 or apf8). The last step is the oxidation of 2-amino-8-hydroxyoctanoic acid to 2-aminooctanedioic acid is catalyzed by the FAD-dependent monooxygenase apf9. In Gibberella fujikuroi (strain CBS 195.34 / IMI 58289 / NRRL A-6831) (Bakanae and foot rot disease fungus), this protein is Apicidin F synthase.